A 130-amino-acid polypeptide reads, in one-letter code: U-scoloptoxin(16)-Er4a (130 aa).

An N-terminal signal peptide occupies residues 1 to 26; sequence MNTVSVVQFLAVGCAVFVLYGRGVFA.

This sequence belongs to the scoloptoxin-16 family. Contains 3 disulfide bonds. As to expression, expressed by the venom gland.

The protein localises to the secreted. The polypeptide is U-scoloptoxin(16)-Er4a (Ethmostigmus rubripes (Giant centipede)).